We begin with the raw amino-acid sequence, 130 residues long: Granulin (130 aa).

The signal sequence occupies residues 1 to 26; it reads MNYSKIFIFGIISLILMALFSSTVES. 2 disulfides stabilise this stretch: Cys-67/Cys-79 and Cys-73/Cys-89.

The protein belongs to the granulin family. Post-translationally, granulins are disulfide bridged.

The protein resides in the secreted. The chain is Granulin (grn) from Dictyostelium discoideum (Social amoeba).